The primary structure comprises 252 residues: Phosphomannomutase (252 aa).

Asp-13 functions as the Nucleophile in the catalytic mechanism. Mg(2+) is bound by residues Asp-13 and Asp-15. Asp-15 acts as the Proton donor/acceptor in catalysis. Residues Arg-22, Arg-124, Arg-135, Arg-142, Ser-180, and Asp-182 each contribute to the alpha-D-mannose 1-phosphate site. 3 residues coordinate Mg(2+): Asp-208, Tyr-220, and Thr-225.

This sequence belongs to the eukaryotic PMM family. Homodimer. Mg(2+) serves as cofactor. As to expression, expressed in roots, stems, leaves, flowers and immature fruits.

The protein resides in the cytoplasm. It catalyses the reaction alpha-D-mannose 1-phosphate = D-mannose 6-phosphate. It participates in nucleotide-sugar biosynthesis; GDP-alpha-D-mannose biosynthesis; alpha-D-mannose 1-phosphate from D-fructose 6-phosphate: step 2/2. In terms of biological role, catalyzes the interconversion of mannose-6-phosphate to mannose-1-phosphate, the precursor for the synthesis of GDP-mannose. GDP-mannose is an essential sugar nucleotide for the synthesis of D-mannose-containing cell wall polysaccharides (galactomannans and glucomannans), glycolipids, glycoproteins and the antioxidant L-ascorbate. Can complement the yeast temperature-sensitive mutant sec53-6. The chain is Phosphomannomutase from Nicotiana benthamiana.